Consider the following 166-residue polypeptide: Ribosome maturation factor RimM (166 aa).

The PRC barrel domain maps to 90–163 (EGQYFIKDII…KIVIKAVEEW (74 aa)).

It belongs to the RimM family. Binds ribosomal protein uS19.

The protein resides in the cytoplasm. Its function is as follows. An accessory protein needed during the final step in the assembly of 30S ribosomal subunit, possibly for assembly of the head region. Essential for efficient processing of 16S rRNA. May be needed both before and after RbfA during the maturation of 16S rRNA. It has affinity for free ribosomal 30S subunits but not for 70S ribosomes. The chain is Ribosome maturation factor RimM from Clostridium acetobutylicum (strain ATCC 824 / DSM 792 / JCM 1419 / IAM 19013 / LMG 5710 / NBRC 13948 / NRRL B-527 / VKM B-1787 / 2291 / W).